We begin with the raw amino-acid sequence, 126 residues long: uncharacterized protein (126 aa).

Residues Ile48–Val68 traverse the membrane as a helical segment.

The protein resides in the membrane. This is an uncharacterized protein from Homo sapiens (Human).